The primary structure comprises 197 residues: Large ribosomal subunit protein uL18 (197 aa).

It belongs to the universal ribosomal protein uL18 family. As to quaternary structure, part of the 50S ribosomal subunit. Contacts the 5S and 23S rRNAs.

In terms of biological role, this is one of the proteins that bind and probably mediate the attachment of the 5S RNA into the large ribosomal subunit, where it forms part of the central protuberance. This is Large ribosomal subunit protein uL18 from Sulfolobus acidocaldarius (strain ATCC 33909 / DSM 639 / JCM 8929 / NBRC 15157 / NCIMB 11770).